Consider the following 745-residue polypeptide: MKETDREAVATAVQRVAGMLQRPDQLDKVEQYRRREARKKASVEARLKAAIQSQLDGVRTGLSQLHNALNDVKDIQQSLADVSKDWRQSINTIESLKDVKDAVVQHSQLAAAVENLKNIFSVPEIVRETQDLIEQGALLQAHRKLMDLECSRDGLMYEQYRMDSGNTRDMTLIHGYFGSTQGLSDELAKQLWMVLQRSLVTVRRDPTLLVSVVRIIEREEKIDRRILDRKKQTGFVPPGRPKNWKEKMFTILERTVTTRIEGTQADTRESDKMWLVRHLEIIRKYVLDDLIVAKNLMVQCFPPHYEIFKNLLNMYHQALSTRMQDLASEDLEANEIVSLLTWVLNTYTSTEMMRNVELAPEVDVGTLEPLLSPHVVSELLDTYMSTLTSNIIAWLRKALETDKKDWVKETEPEADQDGYYQTTLPAIVFQMFEQNLQVAAQISEDLKTKVLVLCLQQMNSFLSRYKDEAQLYKEEHLRNRQHPHCYVQYMIAIINNCQTFKESIVSLKRKYLKNEVEEGVSPSQPSMDGILDAIAKEGCSGLLEEVFLDLEQHLNELMTKKWLLGSNAVDIICVTVEDYFNDFAKIKKPYKKRMTAEAHRRVVVEYLRAVMQKRISFRSPEERKEGAEKMVREAEQLRFLFRKLASGFGEDVDGYCDTIVAVAEVIKLTDPSLLYLEVSTLVSKYPDIRDDHIGALLAVRGDASRDMKQTIMETLEQGPAQASPSYVPLFKDIVVPSLNVAKLLK.

Position 28 is an N6-acetyllysine (Lys-28).

This sequence belongs to the SEC6 family. As to quaternary structure, the exocyst complex is composed of EXOC1, EXOC2, EXOC3, EXOC4, EXOC5, EXOC6, EXOC7 and EXOC8. Interacts with EXOC3L1. Interacts with BIRC6/bruce. Interacts with MYRIP. Interacts with SLC6A9. In terms of tissue distribution, expressed in epididymis (at protein level).

The protein localises to the cytoplasm. Its subcellular location is the perinuclear region. The protein resides in the cell projection. It localises to the growth cone. It is found in the midbody. The protein localises to the golgi apparatus. Its subcellular location is the neuron projection. Component of the exocyst complex involved in the docking of exocytic vesicles with fusion sites on the plasma membrane. This is Exocyst complex component 3 (EXOC3) from Homo sapiens (Human).